Here is a 475-residue protein sequence, read N- to C-terminus: MKYISTRGQSPALSFSEILLGGLAPDGGLYLPEQYPQFSADALSAMRGMNYRDLAFTILSRLIDDIPADDLRIIVDKTYRADVYAYARPGQDAEDITPTYKLEDDLYLLSLSNGPTLAFKDMAMQLLGNLFEYVLAQKGETTNILGATSGDTGSAAEYAMRGKQGVKVFMLSPHQKMSRFQTAQMFSLQDDNIFNIAVKGVFDDCQDIVKAVSNDHAFKAKNKIGAVNSINWARVAAQVVYYFKGYFAVTADNAQQVSFAVPSGNFGNVCAGHIARMMGLPIAKLVVATNENDVLDEFFKTGVYRPRGSANTYHTSSPSMDISKASNFERFVFDLVGRDAAKVRELWGKVDAGGSFDLNDGGWFAKVADYGFVSGSSNHANRMQTIKATHERYGVTIDTHTADGLKVALEHREAGTPMLVLETALPAKFEDAIVEALGHKPERPHSLEGLESLPQRFEVMEADAAVIKQFIVEHI.

At K120 the chain carries N6-(pyridoxal phosphate)lysine.

Belongs to the threonine synthase family. Pyridoxal 5'-phosphate serves as cofactor.

It carries out the reaction O-phospho-L-homoserine + H2O = L-threonine + phosphate. The protein operates within amino-acid biosynthesis; L-threonine biosynthesis; L-threonine from L-aspartate: step 5/5. Functionally, catalyzes the gamma-elimination of phosphate from L-phosphohomoserine and the beta-addition of water to produce L-threonine. This chain is Threonine synthase (thrC), found in Methylobacillus glycogenes.